Consider the following 31-residue polypeptide: Photosystem II reaction center protein T (31 aa).

The helical transmembrane segment at 3–23 (ALVYTFLLVGTLGIIFFSIFF) threads the bilayer.

The protein belongs to the PsbT family. PSII is composed of 1 copy each of membrane proteins PsbA, PsbB, PsbC, PsbD, PsbE, PsbF, PsbH, PsbI, PsbJ, PsbK, PsbL, PsbM, PsbT, PsbY, PsbZ, Psb30/Ycf12, at least 3 peripheral proteins of the oxygen-evolving complex and a large number of cofactors. It forms dimeric complexes.

The protein localises to the plastid. It is found in the chloroplast thylakoid membrane. Functionally, found at the monomer-monomer interface of the photosystem II (PS II) dimer, plays a role in assembly and dimerization of PSII. PSII is a light-driven water plastoquinone oxidoreductase, using light energy to abstract electrons from H(2)O, generating a proton gradient subsequently used for ATP formation. In Tupiella akineta (Green alga), this protein is Photosystem II reaction center protein T.